We begin with the raw amino-acid sequence, 963 residues long: MHC class II regulatory factor RFX1 (963 aa).

Disordered regions lie at residues 1 to 88 (MATQ…APSP), 105 to 126 (ASET…VPTQ), 174 to 218 (QSPA…GTPA), and 361 to 392 (SSSE…GSSG). Residues 20 to 41 (PQAPPQALPQPPPPAAPQPPAA) show a composition bias toward pro residues. The segment covering 42–67 (ATPQPQYVTELQSPQPQTQPPGSQKQ) has biased composition (low complexity). A Phosphoserine modification is found at serine 54. Over residues 75-87 (APAPSQPATPAPS) the composition is skewed to pro residues. Composition is skewed to polar residues over residues 107–119 (ETVS…STAS), 181–196 (KSGQ…QQVH), and 204–214 (VQANNSTSKTA). Positions 361 to 372 (SSSEAGASNSSV) are enriched in low complexity. Residues 373-392 (GAGGNGGGGSSGGGSGGSSG) are compositionally biased toward gly residues. A DNA-binding region (RFX-type winged-helix) is located at residues 423–498 (TVQWLLDNYE…YHYYGLRIKA (76 aa)). The tract at residues 899-948 (SLNPLDPDKDEEEEEEEESEDELPQDISLAAGSESPALGPEALEPPAKLA) is disordered. The span at 906–922 (DKDEEEEEEEESEDELP) shows a compositional bias: acidic residues. Low complexity predominate over residues 932-947 (ESPALGPEALEPPAKL). A phosphoserine mark is found at serine 962 and serine 963.

Belongs to the RFX family. Homodimer; binds DNA as a homodimer. Heterodimer; heterodimerizes with RFX2 and RFX3.

It is found in the nucleus. Regulatory factor essential for MHC class II genes expression. Binds to the X boxes of MHC class II genes. The sequence is that of MHC class II regulatory factor RFX1 (Rfx1) from Mus musculus (Mouse).